The primary structure comprises 123 residues: Testis-expressed protein 12 (123 aa).

A disordered region spans residues 1 to 41; sequence MMANHLVKPDSRNCKRARELEPQVSDSPQVSSLGKSESSLS. The segment covering 7 to 21 has biased composition (basic and acidic residues); that stretch reads VKPDSRNCKRARELE. The span at 31–41 shows a compositional bias: low complexity; the sequence is SSLGKSESSLS.

In terms of assembly, interacts with SYCE2. Testis (at protein level). Detected in ovary. Expressed in both male and female germ cells.

The protein localises to the chromosome. In terms of biological role, component of the transverse central element of synaptonemal complexes (SCS), formed between homologous chromosomes during meiotic prophase. Requires SYCP1 in order to be incorporated into the central element. The protein is Testis-expressed protein 12 (Tex12) of Mus musculus (Mouse).